Consider the following 214-residue polypeptide: Probable transaldolase (214 aa).

The Schiff-base intermediate with substrate role is filled by K83.

The protein belongs to the transaldolase family. Type 3B subfamily.

Its subcellular location is the cytoplasm. It carries out the reaction D-sedoheptulose 7-phosphate + D-glyceraldehyde 3-phosphate = D-erythrose 4-phosphate + beta-D-fructose 6-phosphate. Its pathway is carbohydrate degradation; pentose phosphate pathway; D-glyceraldehyde 3-phosphate and beta-D-fructose 6-phosphate from D-ribose 5-phosphate and D-xylulose 5-phosphate (non-oxidative stage): step 2/3. In terms of biological role, transaldolase is important for the balance of metabolites in the pentose-phosphate pathway. The sequence is that of Probable transaldolase from Clostridium botulinum (strain Alaska E43 / Type E3).